Consider the following 61-residue polypeptide: Small ribosomal subunit protein uS14 (61 aa).

Zn(2+) contacts are provided by cysteine 24, cysteine 27, cysteine 40, and cysteine 43.

The protein belongs to the universal ribosomal protein uS14 family. Zinc-binding uS14 subfamily. Part of the 30S ribosomal subunit. Contacts proteins S3 and S10. Zn(2+) is required as a cofactor.

Its function is as follows. Binds 16S rRNA, required for the assembly of 30S particles and may also be responsible for determining the conformation of the 16S rRNA at the A site. This is Small ribosomal subunit protein uS14 from Helicobacter pylori (strain G27).